A 402-amino-acid chain; its full sequence is Beta-ketoacyl-[acyl-carrier-protein] synthase III B, chloroplastic (402 aa).

Residues cysteine 178, histidine 328, and asparagine 358 contribute to the active site.

The protein belongs to the thiolase-like superfamily. FabH family.

It is found in the plastid. The protein localises to the chloroplast. It carries out the reaction malonyl-[ACP] + acetyl-CoA + H(+) = 3-oxobutanoyl-[ACP] + CO2 + CoA. Its pathway is lipid metabolism; fatty acid biosynthesis. Functionally, catalyzes the condensation reaction of fatty acid synthesis by the addition to an acyl acceptor of two carbons from malonyl-ACP. KAS III catalyzes the first condensation reaction which initiates fatty acid synthesis and may therefore play a role in governing the total rate of fatty acid production. Possesses both acetoacetyl-ACP synthase and acetyl transacylase activities. This is Beta-ketoacyl-[acyl-carrier-protein] synthase III B, chloroplastic (KAS3B) from Cuphea wrightii (Wright's waxweed).